We begin with the raw amino-acid sequence, 359 residues long: Pheromone receptor 1 (359 aa).

Transmembrane regions (helical) follow at residues 5 to 25, 33 to 53, 71 to 87, 110 to 130, 147 to 167, 206 to 226, and 268 to 288; these read VTPF…GWHI, ITLS…SVAW, LRHA…LVIA, IIID…LMIV, FLSL…IVSF, LLVL…GSVS, and LILS…MFGL. The disordered stretch occupies residues 335–359; the sequence is TSGGIDGSPHSEKFSINTPTKYEEA. Polar residues predominate over residues 348 to 359; sequence FSINTPTKYEEA.

The protein belongs to the G-protein coupled receptor 4 family.

It localises to the membrane. Its function is as follows. Receptor for the A2 pheromone, a prenylated mating factor. The chain is Pheromone receptor 1 (PRA1) from Ustilago hordei (Barley covered smut fungus).